The sequence spans 281 residues: E2F-associated phosphoprotein (281 aa).

At Met-1 the chain carries N-acetylmethionine. Residues 1–27 are disordered; the sequence is MNRLQDDYDPYAVEEPSDEEPALSSSE. Over residues 15–27 the composition is skewed to acidic residues; it reads EPSDEEPALSSSE. Ser-17 is subject to Phosphoserine. Thr-37 bears the Phosphothreonine mark. Residues Ser-109 and Ser-111 each carry the phosphoserine modification. The segment at 222–245 is disordered; sequence PENRRKRRSAKKMRSNPEDPAERE. Over residues 225-235 the composition is skewed to basic residues; the sequence is RRKRRSAKKMR. The segment covering 236-245 has biased composition (basic and acidic residues); that stretch reads SNPEDPAERE.

As to quaternary structure, interacts with E2F1. The C-terminal half binds the N-terminal of E2F1. Also interacts with E2F2 and E2F3, but not E2F4.

The protein resides in the cytoplasm. Its subcellular location is the nucleus. Functionally, may play an important role in the fine-tuning of both major E2F1 activities, the regulation of the cell-cycle and the induction of apoptosis. Promotes S-phase entry, and inhibits p14(ARP) expression. The protein is E2F-associated phosphoprotein (Eapp) of Mus musculus (Mouse).